A 367-amino-acid chain; its full sequence is Cytochrome P450 119 (367 aa).

Positions 76, 80, 257, 259, 315, and 317 each coordinate heme.

It belongs to the cytochrome P450 family. Requires heme as cofactor.

Its subcellular location is the cytoplasm. This Sulfurisphaera tokodaii (strain DSM 16993 / JCM 10545 / NBRC 100140 / 7) (Sulfolobus tokodaii) protein is Cytochrome P450 119 (cyp119).